Reading from the N-terminus, the 90-residue chain is Small ribosomal subunit protein uS15c (90 aa).

Belongs to the universal ribosomal protein uS15 family. As to quaternary structure, part of the 30S ribosomal subunit.

The protein localises to the plastid. Its subcellular location is the chloroplast. This is Small ribosomal subunit protein uS15c (rps15) from Buxus microphylla (Littleleaf boxwood).